The primary structure comprises 304 residues: Non-specific ribonucleoside hydrolase RihC (304 aa).

H235 is a catalytic residue.

The protein belongs to the IUNH family. RihC subfamily.

In terms of biological role, hydrolyzes both purine and pyrimidine ribonucleosides with a broad-substrate specificity. The protein is Non-specific ribonucleoside hydrolase RihC of Salmonella paratyphi A (strain ATCC 9150 / SARB42).